The following is a 189-amino-acid chain: Prostaglandin-H2 D-isomerase (189 aa).

An N-terminal signal peptide occupies residues 1–24 (MATPSSLWLGLALLGTLGVLQTPA). Glutamine 25 carries the post-translational modification Pyrrolidone carboxylic acid. A glycan (N-linked (GlcNAc...) asparagine) is linked at asparagine 49. Cysteine 63 functions as the Nucleophile in the catalytic mechanism. A glycan (N-linked (GlcNAc...) asparagine) is linked at asparagine 76. Cysteines 87 and 184 form a disulfide.

The protein belongs to the calycin superfamily. Lipocalin family. As to quaternary structure, monomer. Abundant in the brain and CNS, where it is expressed in tissues of the blood-brain barrier and secreted into the cerebro-spinal fluid.

It is found in the rough endoplasmic reticulum. The protein resides in the nucleus membrane. The protein localises to the golgi apparatus. It localises to the cytoplasm. Its subcellular location is the perinuclear region. It is found in the secreted. The enzyme catalyses prostaglandin H2 = prostaglandin D2. Functionally, catalyzes the conversion of PGH2 to PGD2, a prostaglandin involved in smooth muscle contraction/relaxation and a potent inhibitor of platelet aggregation. Involved in a variety of CNS functions, such as sedation, NREM sleep and PGE2-induced allodynia, and may have an anti-apoptotic role in oligodendrocytes. Binds small non-substrate lipophilic molecules, including biliverdin, bilirubin, retinal, retinoic acid and thyroid hormone, and may act as a scavenger for harmful hydrophobic molecules and as a secretory retinoid and thyroid hormone transporter. Possibly involved in development and maintenance of the blood-brain, blood-retina, blood-aqueous humor and blood-testis barrier. It is likely to play important roles in both maturation and maintenance of the central nervous system and male reproductive system. Involved in PLA2G3-dependent maturation of mast cells. PLA2G3 is secreted by immature mast cells and acts on nearby fibroblasts upstream to PTDGS to synthesize PGD2, which in turn promotes mast cell maturation and degranulation via PTGDR. This chain is Prostaglandin-H2 D-isomerase (PTGDS), found in Sus scrofa (Pig).